A 356-amino-acid polypeptide reads, in one-letter code: UDP-3-O-acylglucosamine N-acyltransferase (356 aa).

Histidine 242 serves as the catalytic Proton acceptor.

It belongs to the transferase hexapeptide repeat family. LpxD subfamily. In terms of assembly, homotrimer.

It carries out the reaction a UDP-3-O-[(3R)-3-hydroxyacyl]-alpha-D-glucosamine + a (3R)-hydroxyacyl-[ACP] = a UDP-2-N,3-O-bis[(3R)-3-hydroxyacyl]-alpha-D-glucosamine + holo-[ACP] + H(+). It participates in bacterial outer membrane biogenesis; LPS lipid A biosynthesis. Functionally, catalyzes the N-acylation of UDP-3-O-acylglucosamine using 3-hydroxyacyl-ACP as the acyl donor. Is involved in the biosynthesis of lipid A, a phosphorylated glycolipid that anchors the lipopolysaccharide to the outer membrane of the cell. This chain is UDP-3-O-acylglucosamine N-acyltransferase, found in Acinetobacter baumannii (strain AB307-0294).